A 1180-amino-acid chain; its full sequence is RecBCD enzyme subunit RecB (1180 aa).

Positions 1 to 852 (MITTIPKSIN…QSGKNHISTK (852 aa)) are DNA-binding and helicase activity, interacts with RecC. A UvrD-like helicase ATP-binding domain is found at 3–448 (TTIPKSINVT…YFLDTNWRSS (446 aa)). 24–31 (ASAGTGKT) contributes to the ATP binding site. Residues 478 to 745 (SSRINKTTKF…KIVSIHKSKG (268 aa)) form the UvrD-like helicase C-terminal domain. Residues 905–1180 (NYNFTSYSQL…EIIKKLEQIF (276 aa)) form a nuclease activity, interacts with RecD and RecA region. 3 residues coordinate Mg(2+): histidine 964, aspartate 1075, and aspartate 1088. Aspartate 1088 functions as the For nuclease activity in the catalytic mechanism.

This sequence belongs to the helicase family. UvrD subfamily. In terms of assembly, heterotrimer of RecB, RecC and RecD. All subunits contribute to DNA-binding. Interacts with RecA. It depends on Mg(2+) as a cofactor.

The enzyme catalyses Exonucleolytic cleavage (in the presence of ATP) in either 5'- to 3'- or 3'- to 5'-direction to yield 5'-phosphooligonucleotides.. It carries out the reaction Couples ATP hydrolysis with the unwinding of duplex DNA by translocating in the 3'-5' direction.. The catalysed reaction is ATP + H2O = ADP + phosphate + H(+). A helicase/nuclease that prepares dsDNA breaks (DSB) for recombinational DNA repair. Binds to DSBs and unwinds DNA via a highly rapid and processive ATP-dependent bidirectional helicase activity. Unwinds dsDNA until it encounters a Chi (crossover hotspot instigator) sequence from the 3' direction. Cuts ssDNA a few nucleotides 3' to the Chi site. The properties and activities of the enzyme are changed at Chi. The Chi-altered holoenzyme produces a long 3'-ssDNA overhang and facilitates RecA-binding to the ssDNA for homologous DNA recombination and repair. Holoenzyme degrades any linearized DNA that is unable to undergo homologous recombination. In the holoenzyme this subunit contributes ATPase, 3'-5' helicase, exonuclease activity and loads RecA onto ssDNA. This is RecBCD enzyme subunit RecB from Buchnera aphidicola subsp. Baizongia pistaciae (strain Bp).